The sequence spans 346 residues: Glucose-6-phosphatase 3 (346 aa).

Residues 1 to 24 (MESTLGAGIAMAEALQNQLPWLEN) are Lumenal-facing. A helical transmembrane segment spans residues 25 to 45 (VWLWVTFLGDPKSLFLFYFPA). Over 46–54 (AYYASRRVG) the chain is Cytoplasmic. The chain crosses the membrane as a helical span at residues 55-75 (IAVLWISLITEWLNLVFKWFL). Residues 76–108 (FGDRPFWWVHESGYYSQAPAQVHQFPSSCETGP) lie on the Lumenal side of the membrane. Residue R79 participates in substrate binding. Residues 109-129 (GSPSGHCMITGAALWPIMTAV) form a helical membrane-spanning segment. Residue H114 is the Proton donor of the active site. Residues 130–140 (SSQMATRAHSR) lie on the Cytoplasmic side of the membrane. A helical transmembrane segment spans residues 141-162 (WVRVIPSLAYCTFLLAVGLSRV). R161 contributes to the substrate binding site. The Lumenal segment spans residues 163–167 (FLLAH). H167 functions as the Nucleophile in the catalytic mechanism. Residues 168 to 186 (FPHQVLAGLITGAVLGWLM) form a helical membrane-spanning segment. Residues 187–197 (TPQVPMERELS) lie on the Cytoplasmic side of the membrane. The chain crosses the membrane as a helical span at residues 198–218 (FYGLTSLALLLGASLIYWTLF). The Lumenal portion of the chain corresponds to 219 to 254 (TLGLDLSWSINLASKWCERPEWVHLDSRPFASLSRD). Residues 255–273 (SGAALGLGIALHSPCYAQV) form a helical membrane-spanning segment. The Cytoplasmic segment spans residues 274–283 (RRAHLGYGQK). The helical transmembrane segment at 284 to 304 (LVCLVLAMGLLGPLNWLGYPP) threads the bilayer. Topologically, residues 305–307 (QIS) are lumenal. A helical transmembrane segment spans residues 308–328 (LFYIFNFLKYTLWPCLVLALV). Topologically, residues 329-346 (PWLVHMFSAQEAPPIRSS) are cytoplasmic.

Belongs to the glucose-6-phosphatase family.

Its subcellular location is the endoplasmic reticulum membrane. The catalysed reaction is D-glucose 6-phosphate + H2O = D-glucose + phosphate. The protein operates within carbohydrate biosynthesis; gluconeogenesis. Its activity is regulated as follows. Inhibited by vanadate. Its function is as follows. Hydrolyzes glucose-6-phosphate to glucose in the endoplasmic reticulum. May form with the glucose-6-phosphate transporter (SLC37A4/G6PT) a ubiquitously expressed complex responsible for glucose production through glycogenolysis and gluconeogenesis. Probably required for normal neutrophil function. This Bos taurus (Bovine) protein is Glucose-6-phosphatase 3 (G6PC3).